Reading from the N-terminus, the 438-residue chain is Serine hydroxymethyltransferase (438 aa).

(6S)-5,6,7,8-tetrahydrofolate-binding positions include L135 and 139–141; that span reads GHL. K244 is subject to N6-(pyridoxal phosphate)lysine. The interval 361–383 is disordered; sequence GVPNDPLPPVKTSGIRVGSPAGT.

The protein belongs to the SHMT family. As to quaternary structure, homodimer. Requires pyridoxal 5'-phosphate as cofactor.

The protein localises to the cytoplasm. It catalyses the reaction (6R)-5,10-methylene-5,6,7,8-tetrahydrofolate + glycine + H2O = (6S)-5,6,7,8-tetrahydrofolate + L-serine. Its pathway is one-carbon metabolism; tetrahydrofolate interconversion. It participates in amino-acid biosynthesis; glycine biosynthesis; glycine from L-serine: step 1/1. In terms of biological role, catalyzes the reversible interconversion of serine and glycine with tetrahydrofolate (THF) serving as the one-carbon carrier. This reaction serves as the major source of one-carbon groups required for the biosynthesis of purines, thymidylate, methionine, and other important biomolecules. Also exhibits THF-independent aldolase activity toward beta-hydroxyamino acids, producing glycine and aldehydes, via a retro-aldol mechanism. This chain is Serine hydroxymethyltransferase, found in Rhizorhabdus wittichii (strain DSM 6014 / CCUG 31198 / JCM 15750 / NBRC 105917 / EY 4224 / RW1) (Sphingomonas wittichii).